The following is a 197-amino-acid chain: UPF0314 protein R03235 (197 aa).

A run of 2 helical transmembrane segments spans residues 16-36 and 152-172; these read ALWLLACLGVLAIQVLVQHLM and LPVAATVAIAIVLELFTGYMV.

Belongs to the UPF0314 family.

It is found in the cell membrane. This is UPF0314 protein R03235 from Rhizobium meliloti (strain 1021) (Ensifer meliloti).